The sequence spans 319 residues: tRNA N6-adenosine threonylcarbamoyltransferase (319 aa).

The Fe cation site is built by His-110 and His-114. Substrate contacts are provided by residues 135–139 (VVSGG), Asp-168, Gly-181, Asp-185, and Asn-277. Asp-301 is a Fe cation binding site.

This sequence belongs to the KAE1 / TsaD family. It depends on Fe(2+) as a cofactor.

It localises to the cytoplasm. The catalysed reaction is L-threonylcarbamoyladenylate + adenosine(37) in tRNA = N(6)-L-threonylcarbamoyladenosine(37) in tRNA + AMP + H(+). In terms of biological role, required for the formation of a threonylcarbamoyl group on adenosine at position 37 (t(6)A37) in tRNAs that read codons beginning with adenine. Is involved in the transfer of the threonylcarbamoyl moiety of threonylcarbamoyl-AMP (TC-AMP) to the N6 group of A37, together with TsaE and TsaB. TsaD likely plays a direct catalytic role in this reaction. This Mycoplasma pneumoniae (strain ATCC 29342 / M129 / Subtype 1) (Mycoplasmoides pneumoniae) protein is tRNA N6-adenosine threonylcarbamoyltransferase.